Reading from the N-terminus, the 349-residue chain is Isopentenyl-diphosphate delta-isomerase (349 aa).

Substrate is bound at residue 9 to 10 (RK). Residues 65-67 (AMT), serine 95, and asparagine 124 contribute to the FMN site. 95 to 97 (STH) is a binding site for substrate. Glutamine 154 serves as a coordination point for substrate. Residue glutamate 155 coordinates Mg(2+). FMN-binding positions include lysine 186, serine 211, threonine 216, 262 to 264 (GLR), and 283 to 284 (SR).

This sequence belongs to the IPP isomerase type 2 family. In terms of assembly, homooctamer. Dimer of tetramers. The cofactor is FMN. NADPH is required as a cofactor. Mg(2+) serves as cofactor.

The protein localises to the cytoplasm. The catalysed reaction is isopentenyl diphosphate = dimethylallyl diphosphate. In terms of biological role, involved in the biosynthesis of isoprenoids. Catalyzes the 1,3-allylic rearrangement of the homoallylic substrate isopentenyl (IPP) to its allylic isomer, dimethylallyl diphosphate (DMAPP). The protein is Isopentenyl-diphosphate delta-isomerase of Staphylococcus aureus.